We begin with the raw amino-acid sequence, 326 residues long: Protein SEH1 (326 aa).

WD repeat units follow at residues 7 to 46 (TLDS…SSTF), 54 to 95 (VSES…AHGL), 105 to 146 (NKSS…ELKN), 224 to 266 (DKGD…DLEG), and 278 to 317 (GHQG…EWHE).

The protein belongs to the WD repeat SEC13 family. Part of the nuclear pore complex (NPC). The NPC has an eight-fold symmetrical structure comprising a central transport channel and two rings, the cytoplasmic and nuclear rings, to which eight filaments are attached. The cytoplasmic filaments have loose ends, while the nuclear filaments are joined in a distal ring, forming a nuclear basket. NPCs are highly dynamic in configuration and composition, and can be devided in 3 subcomplexes, the NUP62 subcomplex, the NUP107-160 subcomplex and the NUP93 subcomplex, containing approximately 30 different nucleoporin proteins.

The protein resides in the nucleus envelope. It is found in the nucleus. The protein localises to the cytoplasm. Its subcellular location is the nuclear pore complex. Its function is as follows. Required for proper export of mRNAs from the nucleus to the cytoplasm. This is Protein SEH1 from Arabidopsis thaliana (Mouse-ear cress).